The primary structure comprises 653 residues: Pentatricopeptide repeat-containing protein At3g14730 (653 aa).

PPR repeat units lie at residues 59-93, 95-119, 125-159, 160-193, 194-224, 226-260, 261-295, 296-326, 327-361, 362-396, 401-431, 432-466, 467-497, and 503-537; these read NVAT…GFLD, SPRA…VLVF, DVFG…GILP, DKYT…GFDS, DCYV…LPDR, DSVL…GVGV, SRHT…GSGS, DIVV…MDER, DLFT…GIRP, DIVT…GLLN, NEFI…MRVK, DSAS…GVKP, DEIT…METV, and TSDH…DNPV. The tract at residues 538 to 613 is type E motif; the sequence is VWRSILSSCR…TPGCSWIVLK (76 aa). The tract at residues 614-644 is type E(+) motif; the sequence is NGVHTFFTGNQTHPEFKSIHDWLSLVISHMH.

It belongs to the PPR family. PCMP-E subfamily.

This Arabidopsis thaliana (Mouse-ear cress) protein is Pentatricopeptide repeat-containing protein At3g14730 (PCMP-E31).